A 258-amino-acid polypeptide reads, in one-letter code: MLAKRIIPCLDVGNNKVIKGIQFKDHKIVGDILELANRYAKSGADELVFYDITASPNDQVVNKRWISQIAKVINIPFCVAGGINTLKQAKQILASGADKISINSPALINPMLIQELADHLGTQCVVVSIDTWHNPQKKIYQVKCYTGDSTRAKITTWQTLDWVKKVQEYGAGEIVLNMMNQDGMKNGYDLDQLRNIRKHCQVPLIASGGAGTYQHFLEAFRDADVDGALAASVFHNQIIDIHKLKQFLNKEGIKIRLC.

Active-site residues include aspartate 11 and aspartate 130.

Belongs to the HisA/HisF family. Heterodimer of HisH and HisF.

Its subcellular location is the cytoplasm. The enzyme catalyses 5-[(5-phospho-1-deoxy-D-ribulos-1-ylimino)methylamino]-1-(5-phospho-beta-D-ribosyl)imidazole-4-carboxamide + L-glutamine = D-erythro-1-(imidazol-4-yl)glycerol 3-phosphate + 5-amino-1-(5-phospho-beta-D-ribosyl)imidazole-4-carboxamide + L-glutamate + H(+). Its pathway is amino-acid biosynthesis; L-histidine biosynthesis; L-histidine from 5-phospho-alpha-D-ribose 1-diphosphate: step 5/9. Functionally, IGPS catalyzes the conversion of PRFAR and glutamine to IGP, AICAR and glutamate. The HisF subunit catalyzes the cyclization activity that produces IGP and AICAR from PRFAR using the ammonia provided by the HisH subunit. This is Imidazole glycerol phosphate synthase subunit HisF from Blochmanniella pennsylvanica (strain BPEN).